Here is a 503-residue protein sequence, read N- to C-terminus: Maturase K (503 aa).

It belongs to the intron maturase 2 family. MatK subfamily.

The protein localises to the plastid. It localises to the chloroplast. Its function is as follows. Usually encoded in the trnK tRNA gene intron. Probably assists in splicing its own and other chloroplast group II introns. In Diospyros virginiana (American persimmon), this protein is Maturase K.